The sequence spans 399 residues: Cell division protein DivIB (399 aa).

Disordered regions lie at residues 1 to 23 (MSKD…SEWQ) and 35 to 119 (EEEA…ATKE). The Cytoplasmic segment spans residues 1–133 (MSKDKKNEDK…AKIPGIHILR (133 aa)). 2 stretches are compositionally biased toward basic and acidic residues: residues 35-65 (EEEA…KQDQ) and 75-119 (ESAK…ATKE). Residues 134 to 154 (AFTILFPSLLLLFVSAYLLSP) traverse the membrane as a helical segment. Residues 155–399 (YATMKDIRVE…NQTTQRSSRR (245 aa)) lie on the Extracellular side of the membrane. One can recognise a POTRA domain in the interval 156–226 (ATMKDIRVEG…TKFTIKVKEY (71 aa)). The segment covering 364–388 (KAKQEAKEAEKKQEEEQKKQEEESN) has biased composition (basic and acidic residues). The interval 364–399 (KAKQEAKEAEKKQEEEQKKQEEESNRNQTTQRSSRR) is disordered. Residues 389–399 (RNQTTQRSSRR) are compositionally biased toward polar residues.

The protein belongs to the FtsQ/DivIB family. DivIB subfamily.

The protein localises to the cell membrane. Cell division protein that may be involved in stabilizing or promoting the assembly of the division complex. This chain is Cell division protein DivIB, found in Streptococcus pneumoniae serotype 4 (strain ATCC BAA-334 / TIGR4).